We begin with the raw amino-acid sequence, 255 residues long: tRNA (guanine-N(1)-)-methyltransferase (255 aa).

S-adenosyl-L-methionine is bound by residues G113 and 133–138 (IGDYVL).

Belongs to the RNA methyltransferase TrmD family. As to quaternary structure, homodimer.

The protein resides in the cytoplasm. The enzyme catalyses guanosine(37) in tRNA + S-adenosyl-L-methionine = N(1)-methylguanosine(37) in tRNA + S-adenosyl-L-homocysteine + H(+). Specifically methylates guanosine-37 in various tRNAs. The chain is tRNA (guanine-N(1)-)-methyltransferase from Escherichia fergusonii (strain ATCC 35469 / DSM 13698 / CCUG 18766 / IAM 14443 / JCM 21226 / LMG 7866 / NBRC 102419 / NCTC 12128 / CDC 0568-73).